Reading from the N-terminus, the 182-residue chain is Ribosome maturation factor RimM (182 aa).

A PRC barrel domain is found at 102–182; it reads EEGDYYWKDL…TIEVDWDPGF (81 aa).

Belongs to the RimM family. Binds ribosomal protein uS19.

It is found in the cytoplasm. In terms of biological role, an accessory protein needed during the final step in the assembly of 30S ribosomal subunit, possibly for assembly of the head region. Essential for efficient processing of 16S rRNA. May be needed both before and after RbfA during the maturation of 16S rRNA. It has affinity for free ribosomal 30S subunits but not for 70S ribosomes. The protein is Ribosome maturation factor RimM of Salmonella gallinarum (strain 287/91 / NCTC 13346).